The following is an 806-amino-acid chain: G-type lectin S-receptor-like serine/threonine-protein kinase At1g61430 (806 aa).

Residues 1–24 form the signal peptide; it reads MGKKRIVFFAYLPFFTIFMSFSFA. The 120-residue stretch at 25-144 folds into the Bulb-type lectin domain; the sequence is GITKESPFSI…VSGRTLWQSF (120 aa). Over 25-425 the chain is Extracellular; that stretch reads GITKESPFSI…ELDVNKRKMT (401 aa). N-linked (GlcNAc...) asparagine glycans are attached at residues Asn-53, Asn-94, Asn-117, and Asn-236. Residues 277 to 313 enclose the EGF-like domain; that stretch reads PANSCDIYGVCGPFGLCVVSIPPKCKCFKGFVPKFAK. 2 disulfide bridges follow: Cys-281–Cys-293 and Cys-287–Cys-301. Asn-319, Asn-335, and Asn-374 each carry an N-linked (GlcNAc...) asparagine glycan. The 83-residue stretch at 332-414 folds into the PAN domain; sequence CQGNSSGKDA…GELLSIRLAR (83 aa). 2 disulfides stabilise this stretch: Cys-367-Cys-388 and Cys-371-Cys-377. Residues 426 to 446 traverse the membrane as a helical segment; that stretch reads IVASTVSLTLFVIFGFAAFGF. Residues 447-806 are Cytoplasmic-facing; it reads WRCRVEHNAH…EMTESVIQGR (360 aa). Positions 489-777 constitute a Protein kinase domain; that stretch reads FSLSNKLGPG…DLPLPKKPTF (289 aa). ATP contacts are provided by residues 495-503 and Lys-520; that span reads LGPGGFGSV. Ser-526 and Ser-541 each carry phosphoserine. The segment at 581–598 is caM-binding; sequence RKKLELDWPKRFEIIEGI. Residue Asp-617 is the Proton acceptor of the active site. Phosphoserine is present on residues Ser-621 and Ser-634. Thr-651 carries the phosphothreonine modification. Phosphoserine is present on residues Ser-694, Ser-695, and Ser-788.

This sequence belongs to the protein kinase superfamily. Ser/Thr protein kinase family.

It localises to the cell membrane. It catalyses the reaction L-seryl-[protein] + ATP = O-phospho-L-seryl-[protein] + ADP + H(+). The catalysed reaction is L-threonyl-[protein] + ATP = O-phospho-L-threonyl-[protein] + ADP + H(+). This Arabidopsis thaliana (Mouse-ear cress) protein is G-type lectin S-receptor-like serine/threonine-protein kinase At1g61430.